A 360-amino-acid chain; its full sequence is SVP1-like protein 2 (360 aa).

3 WD repeats span residues 12 to 50 (AHEP…LRMK), 191 to 231 (AHKS…LRFE), and 236 to 275 (LDRA…PQPE).

The protein belongs to the WD repeat PROPPIN family.

The protein localises to the vacuole membrane. It is found in the cytoplasmic vesicle membrane. Involved in mitochondrial or peroxisomal functions and amino acid signaling pathways. This chain is SVP1-like protein 2 (HSV2), found in Pichia angusta (Yeast).